The primary structure comprises 467 residues: MAQHFSLGACDVVGFDLDHTLCRYNLPESARLIYNSFAQFLVKEKGYDEGLLTLTPEDWDFCCKGLALDLEDGTFIKLAADGTVLRASHGTKMMTPEALTEAFGKKEWRHCVSDKRCTSDKPGVSDIPCCSGKCYFYDNYFDLPGALLCARVVDSLTKQNRGQKTFDFWKDVVAGIQHNFKMSAFKENCGFFFPEIKRNLGKYVHRCPESVRKWLRQLKDAGKITMLITSSHSDYCKLLGSYILGEDFADLFDIVITNALKPGFFSHFPSQRPFYTLENDEEKDELPSLDKPGWYSQGNAAHLYELLKKMTSKPEPKVVYFGDSMHSDIFPAHHYTNWETVLILEELQGPEMEKPEEAEPLEKRGKYEAPMVKPLNTLSNKWGSYFIDSVSGRGRAEDSVVYTWSSKRISTYSTIAIPNIESIAELPLDYKFTRFSTNNSKMAGYYPLVHHTLGSQDTDSKIISTEK.

Residue D16 is the Nucleophile of the active site. 2 residues coordinate Mg(2+): D16 and D18. Catalysis depends on D18, which acts as the Proton donor. K181 is subject to N6-acetyllysine. D323 provides a ligand contact to Mg(2+).

This sequence belongs to the 5'(3')-deoxyribonucleotidase family.

This Mus musculus (Mouse) protein is 5'-nucleotidase domain-containing protein 1 (Nt5dc1).